The sequence spans 439 residues: Actin-related protein 3 (439 aa).

A disordered region spans residues 40–71 (PSAGTGGSGSGRPAVANKPSFLTGGAGPGGHL).

The protein belongs to the actin family. ARP3 subfamily. In terms of assembly, component of the Arp2/3 complex composed.

The protein localises to the cytoplasm. Its subcellular location is the cytoskeleton. In terms of biological role, functions as ATP-binding component of the Arp2/3 complex which is involved in regulation of actin polymerization and together with an activating nucleation-promoting factor (NPF) mediates the formation of branched actin networks. Seems to contact the pointed end of the daughter actin filament. The protein is Actin-related protein 3 (arp-3) of Neurospora crassa (strain ATCC 24698 / 74-OR23-1A / CBS 708.71 / DSM 1257 / FGSC 987).